The following is a 264-amino-acid chain: Thymidylate synthase (264 aa).

Arg21 provides a ligand contact to dUMP. Position 51 (His51) interacts with (6R)-5,10-methylene-5,6,7,8-tetrahydrofolate. Arg126 to Arg127 contacts dUMP. Residue Cys146 is the Nucleophile of the active site. DUMP is bound by residues Arg166–Asp169, Asn177, and His207–Tyr209. (6R)-5,10-methylene-5,6,7,8-tetrahydrofolate is bound at residue Asp169. Ala263 is a (6R)-5,10-methylene-5,6,7,8-tetrahydrofolate binding site.

This sequence belongs to the thymidylate synthase family. Bacterial-type ThyA subfamily. As to quaternary structure, homodimer.

It localises to the cytoplasm. The enzyme catalyses dUMP + (6R)-5,10-methylene-5,6,7,8-tetrahydrofolate = 7,8-dihydrofolate + dTMP. It functions in the pathway pyrimidine metabolism; dTTP biosynthesis. Functionally, catalyzes the reductive methylation of 2'-deoxyuridine-5'-monophosphate (dUMP) to 2'-deoxythymidine-5'-monophosphate (dTMP) while utilizing 5,10-methylenetetrahydrofolate (mTHF) as the methyl donor and reductant in the reaction, yielding dihydrofolate (DHF) as a by-product. This enzymatic reaction provides an intracellular de novo source of dTMP, an essential precursor for DNA biosynthesis. The polypeptide is Thymidylate synthase (Brucella ovis (strain ATCC 25840 / 63/290 / NCTC 10512)).